The sequence spans 84 residues: Omega-conotoxin-like ArMKLT1-02 (84 aa).

The signal sequence occupies residues 1–22 (MKVTCMMIVAVLFLTAWTFVTA). Residues 23 to 51 (DDSISALEDLFAKAHDKMENSEASPLNER) constitute a propeptide that is removed on maturation. 3 disulfides stabilise this stretch: Cys-53–Cys-71, Cys-60–Cys-75, and Cys-70–Cys-79.

The protein belongs to the conotoxin O1 superfamily. As to expression, expressed by the venom duct.

It localises to the secreted. Functionally, omega-conotoxins act at presynaptic membranes, they bind and block voltage-gated calcium channels (Cav). The protein is Omega-conotoxin-like ArMKLT1-02 of Conus arenatus (Sand-dusted cone).